The following is a 408-amino-acid chain: Apoptosis-inducing factor homolog A (408 aa).

Residues 34–38 (GCGFG), Arg69, and Asp314 each bind FAD.

This sequence belongs to the FAD-dependent oxidoreductase family. FAD serves as cofactor.

In terms of biological role, putative FAD-dependent oxidoreductase. This Dictyostelium discoideum (Social amoeba) protein is Apoptosis-inducing factor homolog A (aifA).